The sequence spans 110 residues: Large ribosomal subunit protein uL22 (110 aa).

Belongs to the universal ribosomal protein uL22 family. In terms of assembly, part of the 50S ribosomal subunit.

Its function is as follows. This protein binds specifically to 23S rRNA; its binding is stimulated by other ribosomal proteins, e.g. L4, L17, and L20. It is important during the early stages of 50S assembly. It makes multiple contacts with different domains of the 23S rRNA in the assembled 50S subunit and ribosome. In terms of biological role, the globular domain of the protein is located near the polypeptide exit tunnel on the outside of the subunit, while an extended beta-hairpin is found that lines the wall of the exit tunnel in the center of the 70S ribosome. This chain is Large ribosomal subunit protein uL22, found in Shewanella denitrificans (strain OS217 / ATCC BAA-1090 / DSM 15013).